We begin with the raw amino-acid sequence, 268 residues long: Zinc transporter ZupT (268 aa).

Transmembrane regions (helical) follow at residues 5–25 (ILFA…GSII), 38–58 (TVSL…EIFV), 72–92 (AGYI…ALID), 124–144 (MGLF…LATF), 152–172 (TLGI…GLAV), 187–207 (FVLS…GFFL), 211–231 (LFTE…MVYI), and 248–268 (LAIG…LLFL). Fe(2+) contacts are provided by Asn136 and Glu139. Zn(2+) is bound by residues Glu139 and His164. Fe(2+) is bound by residues Asn165, Glu168, and Glu197. Zn(2+) is bound at residue Glu168.

This sequence belongs to the ZIP transporter (TC 2.A.5) family. ZupT subfamily.

Its subcellular location is the cell inner membrane. It carries out the reaction Zn(2+)(in) = Zn(2+)(out). Its function is as follows. Mediates zinc uptake. May also transport other divalent cations. This is Zinc transporter ZupT from Chlorobaculum parvum (strain DSM 263 / NCIMB 8327) (Chlorobium vibrioforme subsp. thiosulfatophilum).